A 76-amino-acid chain; its full sequence is U-scoloptoxin(13)-Sm1a (76 aa).

The first 22 residues, 1–22 (MAYICAXTLAFLLCVNTGIIQA), serve as a signal peptide directing secretion.

It belongs to the scoloptoxin-13 family. Post-translationally, contains 4 disulfide bonds. Expressed by the venom gland.

The protein resides in the secreted. The sequence is that of U-scoloptoxin(13)-Sm1a from Scolopendra morsitans (Tanzanian blue ringleg centipede).